The chain runs to 328 residues: L-lactate dehydrogenase (328 aa).

NAD(+) is bound by residues Val18, Glu39, Lys46, Tyr71, and 85-86 (GA). Residues Gln88 and Arg94 each coordinate substrate. Residues Ser107, 124–126 (AAN), and Ser149 contribute to the NAD(+) site. Residue 126 to 129 (NPVD) participates in substrate binding. Residue 154 to 157 (DSAR) coordinates substrate. Beta-D-fructose 1,6-bisphosphate is bound by residues Arg159 and His174. His181 functions as the Proton acceptor in the catalytic mechanism. At Tyr226 the chain carries Phosphotyrosine. Position 235 (Thr235) interacts with substrate.

Belongs to the LDH/MDH superfamily. LDH family. In terms of assembly, homotetramer.

The protein resides in the cytoplasm. It carries out the reaction (S)-lactate + NAD(+) = pyruvate + NADH + H(+). Its pathway is fermentation; pyruvate fermentation to lactate; (S)-lactate from pyruvate: step 1/1. Its activity is regulated as follows. Allosterically activated by fructose 1,6-bisphosphate (FBP). Functionally, catalyzes the conversion of lactate to pyruvate. In Streptococcus pneumoniae (strain 70585), this protein is L-lactate dehydrogenase.